The primary structure comprises 382 residues: Alkane 1-monooxygenase 1 (382 aa).

Helical transmembrane passes span Met10–Phe30, Phe43–Phe63, Leu90–Phe110, and Trp121–Ile141. His138 and His142 together coordinate Fe cation. A helical transmembrane segment spans residues Ala146 to Val166. 3 residues coordinate Fe cation: His168, His172, and His173. A helical transmembrane segment spans residues Leu236 to Gly256. Positions 312, 315, and 316 each coordinate Fe cation.

The protein belongs to the fatty acid desaturase type 1 family. AlkB subfamily. Fe(3+) is required as a cofactor.

The protein resides in the cell inner membrane. It carries out the reaction octane + 2 reduced [rubredoxin] + O2 + 2 H(+) = 2 oxidized [rubredoxin] + octan-1-ol + H2O. The protein operates within hydrocarbon metabolism; alkane degradation. Functionally, catalyzes the hydroxylation of n-alkanes in the presence of a NADH-rubredoxin reductase and rubredoxin. It preferably hydroxylases C16-C24 hydrocarbons. This is Alkane 1-monooxygenase 1 (alkB1) from Pseudomonas aeruginosa (strain ATCC 15692 / DSM 22644 / CIP 104116 / JCM 14847 / LMG 12228 / 1C / PRS 101 / PAO1).